The primary structure comprises 107 residues: Homeobox protein HD-3 (107 aa).

A DNA-binding region (homeobox) is located at residues 6–65 (SKAPRTRMTAGQTRVLMSFFKDNPFPSTTAREKLSKVLGVGPRTVQIWFQNQRQKARGQA).

The protein resides in the nucleus. The polypeptide is Homeobox protein HD-3 (HD-3) (Encephalitozoon cuniculi (strain GB-M1) (Microsporidian parasite)).